We begin with the raw amino-acid sequence, 479 residues long: Glutamyl-tRNA(Gln) amidotransferase subunit A (479 aa).

Active-site charge relay system residues include lysine 71 and serine 146. The Acyl-ester intermediate role is filled by serine 170.

Belongs to the amidase family. GatA subfamily. As to quaternary structure, heterotrimer of A, B and C subunits.

It catalyses the reaction L-glutamyl-tRNA(Gln) + L-glutamine + ATP + H2O = L-glutaminyl-tRNA(Gln) + L-glutamate + ADP + phosphate + H(+). In terms of biological role, allows the formation of correctly charged Gln-tRNA(Gln) through the transamidation of misacylated Glu-tRNA(Gln) in organisms which lack glutaminyl-tRNA synthetase. The reaction takes place in the presence of glutamine and ATP through an activated gamma-phospho-Glu-tRNA(Gln). This Lactobacillus johnsonii (strain CNCM I-12250 / La1 / NCC 533) protein is Glutamyl-tRNA(Gln) amidotransferase subunit A.